Consider the following 153-residue polypeptide: UPF0178 protein Ccel_2994 (153 aa).

Belongs to the UPF0178 family.

In Ruminiclostridium cellulolyticum (strain ATCC 35319 / DSM 5812 / JCM 6584 / H10) (Clostridium cellulolyticum), this protein is UPF0178 protein Ccel_2994.